The sequence spans 320 residues: GPI-specific phospholipase A2-like PGAP3 (320 aa).

Positions 1–23 (MAKRTAPLLLLTLAVGLAGGSQG) are cleaved as a signal peptide. Residues 24-98 (DREPVYRDCV…QFHGKWPFSR (75 aa)) lie on the Lumenal side of the membrane. Asn-40 carries an N-linked (GlcNAc...) asparagine glycan. Residues 99–119 (FLFIQEPASAVASLLNGLASL) traverse the membrane as a helical segment. Topologically, residues 120–135 (VMLCRYRASVPASSPM) are cytoplasmic. The helical transmembrane segment at 136 to 156 (YHTCMAFAWVSLNAWFWSTVF) threads the bilayer. The Lumenal portion of the chain corresponds to 157–169 (HTRDTDLTEKMDY). Residues 170-190 (FCASAVILHSVYLCCVRTVGL) form a helical membrane-spanning segment. The Cytoplasmic portion of the chain corresponds to 191-198 (QHPSVASA). Residues 199-219 (FGALLLLLLTGHISYLSLVHF) traverse the membrane as a helical segment. Residues 220–223 (DYGY) are Lumenal-facing. A helical membrane pass occupies residues 224-244 (NMMANVAIGLVNLAWWLVWCL). At 245–257 (RNRQRLPHTRRCM) the chain is on the cytoplasmic side. Residues 258–278 (VVVVLLQGLSLLELLDFPPLF) form a helical membrane-spanning segment. A topological domain (lumenal) is located at residue Trp-279. The chain crosses the membrane as a helical span at residues 280 to 299 (VLDAHAIWHISTIPVHTLFF). The Cytoplasmic segment spans residues 300–320 (RFLEDDSLYLLKESGAMFKLD).

The protein belongs to the PGAP3 family.

It is found in the golgi apparatus membrane. Functionally, involved in the fatty acid remodeling steps of GPI-anchor maturation where the unsaturated acyl chain at sn-2 of inositol phosphate is replaced by a saturated stearoyl chain. May catalyze the first step of the fatty acid remodeling, by removing the unsaturated acyl chain at sn-2 of inositol phosphate, generating a lyso-GPI intermediate. The fatty acid remodeling steps is critical for the integration of GPI-APs into lipid rafts. In Mus musculus (Mouse), this protein is GPI-specific phospholipase A2-like PGAP3.